The sequence spans 314 residues: Lysophospholipase D GDPD1 (314 aa).

The Extracellular segment spans residues 1 to 3 (MSS). A helical transmembrane segment spans residues 4 to 24 (TAAFCLLSTLGGYLVTSFLLL). The Cytoplasmic portion of the chain corresponds to 25 to 195 (KYPALLHQRK…VDKCYKENSD (171 aa)). One can recognise a GP-PDE domain in the interval 40–309 (SRHISHRGGA…DYPTKLKEFL (270 aa)). A divalent metal cation contacts are provided by Glu-72, Asp-74, and His-87. A helical membrane pass occupies residues 196-216 (IPILFSLQRVLLILGLFFTGL). Topologically, residues 217 to 314 (LPFVPIREQF…LKEFLNNMSA (98 aa)) are extracellular.

This sequence belongs to the glycerophosphoryl diester phosphodiesterase family.

The protein resides in the cytoplasm. It is found in the membrane. It localises to the perinuclear region. Its subcellular location is the endoplasmic reticulum. The enzyme catalyses a 1-O-alkyl-sn-glycero-3-phosphocholine + H2O = a 1-O-alkyl-sn-glycero-3-phosphate + choline + H(+). It catalyses the reaction 1-hexadecanoyl-sn-glycero-3-phosphocholine + H2O = 1-hexadecanoyl-sn-glycero-3-phosphate + choline + H(+). It carries out the reaction 1-hexadecanoyl-sn-glycero-3-phosphoethanolamine + H2O = 1-hexadecanoyl-sn-glycero-3-phosphate + ethanolamine + H(+). The catalysed reaction is N-hexadecanoyl-sn-glycero-3-phosphoethanolamine + H2O = N-hexadecanoylethanolamine + sn-glycerol 3-phosphate + H(+). The enzyme catalyses N-(5Z,8Z,11Z,14Z-eicosatetraenoyl)-1-(9Z-octadecenoyl)-sn-glycero-3-phosphoethanolamine + H2O = N-(5Z,8Z,11Z,14Z-eicosatetraenoyl)-ethanolamine + 1-(9Z-octadecenoyl)-sn-glycero-3-phosphate + H(+). It catalyses the reaction N,1-di-(9Z-octadecenoyl)-sn-glycero-3-phosphoethanolamine + H2O = N-(9Z-octadecenoyl) ethanolamine + 1-(9Z-octadecenoyl)-sn-glycero-3-phosphate + H(+). It carries out the reaction N-hexadecanoyl-1-(9Z-octadecenoyl)-sn-glycero-3-phosphoethanolamine + H2O = N-hexadecanoylethanolamine + 1-(9Z-octadecenoyl)-sn-glycero-3-phosphate + H(+). The catalysed reaction is 1-O-hexadecyl-sn-glycero-3-phosphocholine + H2O = 1-O-hexadecyl-sn-glycero-3-phosphate + choline + H(+). The enzyme catalyses 1-(9Z-octadecenoyl)-sn-glycero-3-phosphocholine + H2O = 1-(9Z-octadecenoyl)-sn-glycero-3-phosphate + choline + H(+). It catalyses the reaction N,1-dihexadecanoyl-sn-glycero-3-phosphoethanolamine + H2O = N-hexadecanoylethanolamine + 1-hexadecanoyl-sn-glycero-3-phosphate + H(+). It carries out the reaction 1-O-(1Z-octadecenyl)-sn-glycero-3-phospho-(N-5Z,8Z,11Z,14Z-eicosatetraenoyl)-ethanolamine + H2O = 1-O-(1Z-octadecenyl)-sn-glycero-3-phosphate + N-(5Z,8Z,11Z,14Z-eicosatetraenoyl)-ethanolamine + H(+). The catalysed reaction is 1-O-(1Z-octadecenyl)-sn-glycero-3-phospho-(N-9Z-octadecenoyl)-ethanolamine + H2O = 1-O-(1Z-octadecenyl)-sn-glycero-3-phosphate + N-(9Z-octadecenoyl) ethanolamine + H(+). The enzyme catalyses 1-O-(1Z-octadecenyl)-sn-glycero-3-phospho-N-hexadecanoyl-ethanolamine + H2O = 1-O-(1Z-octadecenyl)-sn-glycero-3-phosphate + N-hexadecanoylethanolamine + H(+). Lysophospholipase D activity is increased by magnesium and manganese and inhibited by calcium in a concentration dependent manner. Loss of lysophospholipase D activity by addition of EDTA. Functionally, hydrolyzes lysoglycerophospholipids to produce lysophosphatidic acid (LPA) and the corresponding amines. Shows a preference for 1-O-alkyl-sn-glycero-3-phosphocholine (lyso-PAF), lysophosphatidylethanolamine (lyso-PE) and lysophosphatidylcholine (lyso-PC). May be involved in bioactive N-acylethanolamine biosynthesis from both N-acyl-lysoplasmenylethanolamin (N-acyl-lysoPlsEt) and N-acyl-lysophosphatidylethanolamin (N-acyl-lysoPE). In addition, hydrolyzes glycerophospho-N-acylethanolamine to N-acylethanolamine. Does not display glycerophosphodiester phosphodiesterase activity, since it cannot hydrolyze either glycerophosphoinositol or glycerophosphocholine. The chain is Lysophospholipase D GDPD1 from Rattus norvegicus (Rat).